The primary structure comprises 471 residues: MDSSDIQRTSIAVIGGGLVGSLNACFLAKRNFQVDVYESREDIRMAEFARGRSINLALSYRGRQALKAIGLEDQIVSQGIPMRARMIHSLSGKKSAIPYGTKSQYILSISRENLNKDLLTAVEKYPNAKVHFGHQLLKCRPETGVITLLGPDKVPKDIACDLILGCDGAYSTVRTHLVKKPRFDYSQQYIPHGYMELTIPPQNGDFAMEPNYLHIWPRDTFMMIALPNMNKSFTCTLFMPFEEFEKLLTSRDVLDFFQKYFPDSLHLIGKEALAQDFFRLPAQPMISVKCSSFHFNSHCVLMGDAAHALVPFFGQGMNAGFEDCLVFDELMDKFNNDFSMCLPEFSKFRIPDDHAISDLSMYNYIEMRSHVNSRWFIFQKNIERCLHTLMPSTFIPLYTMVTFSRIRYHEAMLRWQWQKKVINTALFFFGTLVALSTTYLLTGPTFRSSLGCLRRSWNSVTYFQNIGRISL.

FAD contacts are provided by residues V19, 37-40, and A57; that span reads YESR. 2 residues coordinate L-kynurenine: R85 and Y99. FAD contacts are provided by residues R111, L136, T172, D304, and 317–318; that span reads MN. The L-kynurenine site is built by N363 and Y398. The next 2 membrane-spanning stretches (helical) occupy residues 385–404 and 425–445; these read CLHT…VTFS and ALFF…TGPT.

The protein belongs to the aromatic-ring hydroxylase family. KMO subfamily. FAD serves as cofactor.

The protein resides in the mitochondrion outer membrane. It carries out the reaction L-kynurenine + NADPH + O2 + H(+) = 3-hydroxy-L-kynurenine + NADP(+) + H2O. It participates in cofactor biosynthesis; NAD(+) biosynthesis; quinolinate from L-kynurenine: step 1/3. Its function is as follows. Catalyzes the hydroxylation of L-kynurenine (L-Kyn) to form 3-hydroxy-L-kynurenine (L-3OHKyn). Required for synthesis of quinolinic acid, a neurotoxic NMDA receptor antagonist and potential endogenous inhibitor of NMDA receptor signaling in axonal targeting, synaptogenesis and apoptosis during brain development. Quinolinic acid may also affect NMDA receptor signaling in pancreatic beta cells, osteoblasts, myocardial cells, and the gastrointestinal tract. This chain is Kynurenine 3-monooxygenase, found in Sus scrofa (Pig).